Consider the following 912-residue polypeptide: Probable transmembrane GTPase FZO-like, chloroplastic (912 aa).

Residues 1–54 constitute a chloroplast transit peptide; sequence MRTLISHRQCVTSPFLISAASPPFPGRCFKLSSFTPPRHRRFSSLSIRNISHES. The segment at 51–71 is disordered; the sequence is SHESADQTSSSRPRTLYPGGY. Over 55-773 the chain is Stromal; the sequence is ADQTSSSRPR…SKRLEQDIRE (719 aa). GTP-binding positions include 359-364 and Ser521; that span reads NSGKST. The chain crosses the membrane as a helical span at residues 774 to 794; the sequence is VFFVTVGGLGAAGLSASLLTS. At 795–801 the chain is on the chloroplast intermembrane side; it reads VLPTTLE. The chain crosses the membrane as a helical span at residues 802 to 822; that stretch reads DLLALGLCSAGGYVAIANFPY. At 823–912 the chain is on the stromal side; sequence RRQAIIGKVN…LHVSRDEMRL (90 aa). A coiled-coil region spans residues 877-904; that stretch reads DRLLGIQKELSDIRSKLQLLQVDIDNLH.

Belongs to the TRAFAC class dynamin-like GTPase superfamily. Dynamin/Fzo/YdjA family. Mitofusin subfamily.

The protein resides in the plastid. It is found in the chloroplast inner membrane. The protein localises to the chloroplast thylakoid membrane. Its function is as follows. Probable membrane-remodeling GTPase that plays a unique role in the in the determination of thylakoid and chloroplast morphology and regulates organization of the thylakoid network. Not involved in the determination of mitochondrial morphology or ultrastructure. In Arabidopsis thaliana (Mouse-ear cress), this protein is Probable transmembrane GTPase FZO-like, chloroplastic.